A 205-amino-acid polypeptide reads, in one-letter code: MAGSLYIISAPSGAGKTSLVSKLTEKDSRIQVSISSTTRPKRPGEEDGVNYVFLSVDAFKQKVAENDFLEHAQVFDNYYGTSKSVVESKLAEDKDVILEIDWQGAQQVRKLIPDAVSVFILPPSLKELEKRLRGRGTDSEDVIERRMSDAVNEMKHFNEFDYLVINNHFDTALSELHSIFLANRQACAKQYEKHSVMINELTQQH.

A Guanylate kinase-like domain is found at 3 to 181 (GSLYIISAPS…ALSELHSIFL (179 aa)). 10 to 17 (APSGAGKT) lines the ATP pocket.

This sequence belongs to the guanylate kinase family.

It is found in the cytoplasm. The enzyme catalyses GMP + ATP = GDP + ADP. Essential for recycling GMP and indirectly, cGMP. The polypeptide is Guanylate kinase (Hydrogenovibrio crunogenus (strain DSM 25203 / XCL-2) (Thiomicrospira crunogena)).